Reading from the N-terminus, the 547-residue chain is Chaperonin GroEL (547 aa).

ATP is bound by residues 30 to 33 (TLGP), Lys-51, 87 to 91 (DGTTT), Gly-415, 479 to 481 (NAA), and Asp-495.

The protein belongs to the chaperonin (HSP60) family. In terms of assembly, forms a cylinder of 14 subunits composed of two heptameric rings stacked back-to-back. Interacts with the co-chaperonin GroES.

Its subcellular location is the cytoplasm. The enzyme catalyses ATP + H2O + a folded polypeptide = ADP + phosphate + an unfolded polypeptide.. Its function is as follows. Together with its co-chaperonin GroES, plays an essential role in assisting protein folding. The GroEL-GroES system forms a nano-cage that allows encapsulation of the non-native substrate proteins and provides a physical environment optimized to promote and accelerate protein folding. This Cupriavidus metallidurans (strain ATCC 43123 / DSM 2839 / NBRC 102507 / CH34) (Ralstonia metallidurans) protein is Chaperonin GroEL.